Reading from the N-terminus, the 531-residue chain is UPF0159 protein CPn_0746/CP_1126/CPj0746/CpB0774 (531 aa).

ThyX domains lie at Lys38–His274 and Pro309–Val511.

Belongs to the UPF0159 family.

This Chlamydia pneumoniae (Chlamydophila pneumoniae) protein is UPF0159 protein CPn_0746/CP_1126/CPj0746/CpB0774.